The primary structure comprises 511 residues: Maturase K (511 aa).

This sequence belongs to the intron maturase 2 family. MatK subfamily.

Its subcellular location is the plastid. The protein resides in the chloroplast. Functionally, usually encoded in the trnK tRNA gene intron. Probably assists in splicing its own and other chloroplast group II introns. The sequence is that of Maturase K from Avena sativa (Oat).